Reading from the N-terminus, the 417-residue chain is Probable tubulin polyglutamylase ttll-9 (417 aa).

Positions 23 to 372 constitute a TTL domain; that stretch reads QRKKKILFKC…EKKLIGNENE (350 aa). ATP contacts are provided by residues 188–191, Lys201, and Asp203; that span reads QCYV.

Belongs to the tubulin--tyrosine ligase family. In terms of tissue distribution, expressed in head sensory neurons.

Functionally, polyglutamylase that forms polyglutamate side chains on tubulin. Acts when complexed with other proteins. Appears to be dispensable for polar spindle formation in dividing embryonic cells, for cilia-dependent osmotic avoidance and for male mating behavior. Probably by regulating microtubule stability via the glutamylation of tubulin, regulates PLM axon developmental growth. This Caenorhabditis elegans protein is Probable tubulin polyglutamylase ttll-9.